Here is a 64-residue protein sequence, read N- to C-terminus: Large ribosomal subunit protein bL35 (64 aa).

Belongs to the bacterial ribosomal protein bL35 family.

The protein is Large ribosomal subunit protein bL35 of Ureaplasma parvum serovar 3 (strain ATCC 27815 / 27 / NCTC 11736).